A 252-amino-acid chain; its full sequence is 5-oxoprolinase subunit A (252 aa).

The protein belongs to the LamB/PxpA family. As to quaternary structure, forms a complex composed of PxpA, PxpB and PxpC.

It catalyses the reaction 5-oxo-L-proline + ATP + 2 H2O = L-glutamate + ADP + phosphate + H(+). Its function is as follows. Catalyzes the cleavage of 5-oxoproline to form L-glutamate coupled to the hydrolysis of ATP to ADP and inorganic phosphate. This is 5-oxoprolinase subunit A from Staphylococcus saprophyticus subsp. saprophyticus (strain ATCC 15305 / DSM 20229 / NCIMB 8711 / NCTC 7292 / S-41).